The primary structure comprises 360 residues: UDP-N-acetylglucosamine--N-acetylmuramyl-(pentapeptide) pyrophosphoryl-undecaprenol N-acetylglucosamine transferase (360 aa).

UDP-N-acetyl-alpha-D-glucosamine contacts are provided by residues 15–17 (TGG), N127, R163, S191, I249, 268–273 (ALTVSE), and Q293.

The protein belongs to the glycosyltransferase 28 family. MurG subfamily.

The protein resides in the cell inner membrane. It catalyses the reaction di-trans,octa-cis-undecaprenyl diphospho-N-acetyl-alpha-D-muramoyl-L-alanyl-D-glutamyl-meso-2,6-diaminopimeloyl-D-alanyl-D-alanine + UDP-N-acetyl-alpha-D-glucosamine = di-trans,octa-cis-undecaprenyl diphospho-[N-acetyl-alpha-D-glucosaminyl-(1-&gt;4)]-N-acetyl-alpha-D-muramoyl-L-alanyl-D-glutamyl-meso-2,6-diaminopimeloyl-D-alanyl-D-alanine + UDP + H(+). The protein operates within cell wall biogenesis; peptidoglycan biosynthesis. Cell wall formation. Catalyzes the transfer of a GlcNAc subunit on undecaprenyl-pyrophosphoryl-MurNAc-pentapeptide (lipid intermediate I) to form undecaprenyl-pyrophosphoryl-MurNAc-(pentapeptide)GlcNAc (lipid intermediate II). The protein is UDP-N-acetylglucosamine--N-acetylmuramyl-(pentapeptide) pyrophosphoryl-undecaprenol N-acetylglucosamine transferase of Proteus mirabilis (strain HI4320).